The primary structure comprises 157 residues: tRNA (cytidine(34)-2'-O)-methyltransferase (157 aa).

S-adenosyl-L-methionine contacts are provided by L78, G100, I122, and S130.

The protein belongs to the class IV-like SAM-binding methyltransferase superfamily. RNA methyltransferase TrmH family. TrmL subfamily. As to quaternary structure, homodimer.

It is found in the cytoplasm. It carries out the reaction cytidine(34) in tRNA + S-adenosyl-L-methionine = 2'-O-methylcytidine(34) in tRNA + S-adenosyl-L-homocysteine + H(+). It catalyses the reaction 5-carboxymethylaminomethyluridine(34) in tRNA(Leu) + S-adenosyl-L-methionine = 5-carboxymethylaminomethyl-2'-O-methyluridine(34) in tRNA(Leu) + S-adenosyl-L-homocysteine + H(+). Functionally, methylates the ribose at the nucleotide 34 wobble position in the two leucyl isoacceptors tRNA(Leu)(CmAA) and tRNA(Leu)(cmnm5UmAA). Catalyzes the methyl transfer from S-adenosyl-L-methionine to the 2'-OH of the wobble nucleotide. The polypeptide is tRNA (cytidine(34)-2'-O)-methyltransferase (Escherichia coli O6:H1 (strain CFT073 / ATCC 700928 / UPEC)).